Here is a 136-residue protein sequence, read N- to C-terminus: Large ribosomal subunit protein bL17 (136 aa).

The protein belongs to the bacterial ribosomal protein bL17 family. As to quaternary structure, part of the 50S ribosomal subunit. Contacts protein L32.

The chain is Large ribosomal subunit protein bL17 from Akkermansia muciniphila (strain ATCC BAA-835 / DSM 22959 / JCM 33894 / BCRC 81048 / CCUG 64013 / CIP 107961 / Muc).